The following is a 334-amino-acid chain: Glycerol-3-phosphate dehydrogenase [NAD(P)+] (334 aa).

5 residues coordinate NADPH: Ser-10, Trp-11, His-31, Arg-32, and Lys-105. Sn-glycerol 3-phosphate-binding residues include Lys-105, Gly-136, and Ser-138. An NADPH-binding site is contributed by Ala-140. Sn-glycerol 3-phosphate is bound by residues Lys-191, Asp-244, Ser-254, Arg-255, and Asn-256. The active-site Proton acceptor is the Lys-191. Arg-255 contributes to the NADPH binding site. NADPH contacts are provided by Val-279 and Glu-281.

Belongs to the NAD-dependent glycerol-3-phosphate dehydrogenase family.

The protein resides in the cytoplasm. The enzyme catalyses sn-glycerol 3-phosphate + NAD(+) = dihydroxyacetone phosphate + NADH + H(+). The catalysed reaction is sn-glycerol 3-phosphate + NADP(+) = dihydroxyacetone phosphate + NADPH + H(+). It functions in the pathway membrane lipid metabolism; glycerophospholipid metabolism. Catalyzes the reduction of the glycolytic intermediate dihydroxyacetone phosphate (DHAP) to sn-glycerol 3-phosphate (G3P), the key precursor for phospholipid synthesis. This is Glycerol-3-phosphate dehydrogenase [NAD(P)+] from Chlorobium phaeobacteroides (strain BS1).